Reading from the N-terminus, the 441-residue chain is Lysine histidine transporter 2 (441 aa).

The Cytoplasmic segment spans residues 1-32 (MGNSEMSASEVAAAKQKNVDDWLPITSSRNAK). A helical transmembrane segment spans residues 33 to 53 (WWYSAFHNVTAMVGAGVLSLP). The Extracellular portion of the chain corresponds to 54–58 (YAMSN). Residues 59-79 (LGWGPGVTIMVMSWIITLYTL) traverse the membrane as a helical segment. Residues 80–110 (WQMVEMHEIVPGKRLDRYHELGQHAFGEKLG) are Cytoplasmic-facing. A helical membrane pass occupies residues 111–131 (LWIVVPQQLIVEVGVDIVYMV). Topologically, residues 132–152 (TGGASLKKVHQLVCPDCKEIR) are extracellular. The chain crosses the membrane as a helical span at residues 153–173 (TTFWIMIFASVHFVISHLPNF). Over 174–175 (NS) the chain is Cytoplasmic. The helical transmembrane segment at 176 to 196 (ISIISLAAAVMSLTYSTIAWA) threads the bilayer. Residues 197-222 (ASVHKGVHPDVDYSPRASTDVGKVFN) are Extracellular-facing. The helical transmembrane segment at 223 to 243 (FLNALGDVAFAYAGHNVVLEI) threads the bilayer. At 244–263 (QATIPSTPEMPSKVPMWRGV) the chain is on the cytoplasmic side. The chain crosses the membrane as a helical span at residues 264-284 (IVAYIVVAICYFPVAFLGYYI). Over 285–300 (FGNSVDDNILITLEKP) the chain is Extracellular. A helical membrane pass occupies residues 301–321 (IWLIAMANMFVVIHVIGSYQI). The Cytoplasmic segment spans residues 322–347 (FAMPVFDMLETVLVKKMNFNPSFKLR). A helical membrane pass occupies residues 348 to 370 (FITRSLYVAFTMIVAICVPFFGG). Over 371–373 (LLG) the chain is Extracellular. Residues 374-396 (FFGGFAFAPTTYYLPCIMWLVLK) form a helical membrane-spanning segment. Residues 397–406 (KPKRFGLSWT) are Cytoplasmic-facing. A helical membrane pass occupies residues 407-427 (ANWFCIIVGVLLTILAPIGGL). Residues 428-441 (RTIIINAKTYKFFS) are Extracellular-facing.

The protein belongs to the amino acid/polyamine transporter 2 family. Amino acid/auxin permease (AAAP) (TC 2.A.18.2) subfamily. As to expression, expressed in flower buds and to lower levels in leaves and stems. Not detected in roots and siliques. Restricted to the tapetum cell layer.

Its subcellular location is the cell membrane. With respect to regulation, inhibited by diethylstibestrol (DES), 2,4-dinitrophenol (DNP) and carbonlycyanide m-chlorophenylhydrazone (CCCP). In terms of biological role, amino acid-proton symporter. Transporter with a broad specificity for neutral and acidic amino acids. Basic amino acids are only marginally transported. Involved in import of amino acids into the tapetum cells for synthesis of compounds important for microspore structure. The protein is Lysine histidine transporter 2 (LHT2) of Arabidopsis thaliana (Mouse-ear cress).